We begin with the raw amino-acid sequence, 303 residues long: tRNA pseudouridine synthase B (303 aa).

Asp53 acts as the Nucleophile in catalysis.

Belongs to the pseudouridine synthase TruB family. Type 1 subfamily.

The catalysed reaction is uridine(55) in tRNA = pseudouridine(55) in tRNA. In terms of biological role, responsible for synthesis of pseudouridine from uracil-55 in the psi GC loop of transfer RNAs. This is tRNA pseudouridine synthase B from Zymomonas mobilis subsp. mobilis (strain ATCC 31821 / ZM4 / CP4).